The chain runs to 419 residues: DNA primase DnaG (419 aa).

The Toprim domain occupies 168–244 (DTIIVVEGRS…KVDYVARAPE (77 aa)). Mg(2+)-binding residues include glutamate 174, aspartate 218, and aspartate 220. Basic and acidic residues-rich tracts occupy residues 280–291 (KPAEEAVKREEE) and 306–316 (KAAKPPEEKPP). Positions 280-317 (KPAEEAVKREEEAAAEAKPPAPAVQEKAAKPPEEKPPT) are disordered.

This sequence belongs to the archaeal DnaG primase family. As to quaternary structure, forms a ternary complex with MCM helicase and DNA. Component of the archaeal exosome complex. It depends on Mg(2+) as a cofactor.

The enzyme catalyses ssDNA + n NTP = ssDNA/pppN(pN)n-1 hybrid + (n-1) diphosphate.. RNA polymerase that catalyzes the synthesis of short RNA molecules used as primers for DNA polymerase during DNA replication. Also part of the exosome, which is a complex involved in RNA degradation. Acts as a poly(A)-binding protein that enhances the interaction between heteromeric, adenine-rich transcripts and the exosome. The protein is DNA primase DnaG of Aeropyrum pernix (strain ATCC 700893 / DSM 11879 / JCM 9820 / NBRC 100138 / K1).